A 70-amino-acid polypeptide reads, in one-letter code: Large ribosomal subunit protein uL29 (70 aa).

The protein belongs to the universal ribosomal protein uL29 family.

The protein is Large ribosomal subunit protein uL29 of Clostridium novyi (strain NT).